A 257-amino-acid polypeptide reads, in one-letter code: Cytochrome b561 domain-containing protein At2g30890 (257 aa).

An N-terminal signal peptide occupies residues 1–21; the sequence is MEIHHQLLVSLLFLLLPLCSS. The region spanning 22-219 is the Cytochrome b561 domain; the sequence is QENTRSLAID…LFQDKWSYIQ (198 aa). 5 consecutive transmembrane segments (helical) span residues 55 to 75, 91 to 111, 125 to 145, 157 to 177, and 191 to 211; these read VHGF…IISI, LFFL…IGAV, HQQL…LGFL, WFVG…INIY, and ANLW…VYLF. Heme b contacts are provided by His56, His95, His125, and His161. The tract at residues 235–257 is disordered; the sequence is NISTAETGHGYEVEESKPELEKC. Residues 243 to 257 show a composition bias toward basic and acidic residues; the sequence is HGYEVEESKPELEKC.

Requires heme b as cofactor.

The protein resides in the membrane. This Arabidopsis thaliana (Mouse-ear cress) protein is Cytochrome b561 domain-containing protein At2g30890.